A 630-amino-acid chain; its full sequence is DNA topoisomerase 4 subunit B (630 aa).

Residues tyrosine 5, asparagine 42, aspartate 69, 110 to 116 (GLHGVGI), and lysine 334 each bind ATP. In terms of domain architecture, Toprim spans 412–525 (TELFLVEGDS…HGHVYVALPP (114 aa)). Glutamate 418, aspartate 490, and aspartate 492 together coordinate Mg(2+).

The protein belongs to the type II topoisomerase family. ParE type 1 subfamily. Heterotetramer composed of ParC and ParE. The cofactor is Mg(2+). Mn(2+) is required as a cofactor. Ca(2+) serves as cofactor.

The catalysed reaction is ATP-dependent breakage, passage and rejoining of double-stranded DNA.. Its activity is regulated as follows. Pyrrolopyrimidines inhibit both GyrB and its paralog in topoisomerase IV (parE). Functionally, topoisomerase IV is essential for chromosome segregation; it is the principal protein responsible for decatenating newly replicated chromosomes. It relaxes supercoiled DNA. MukB stimulates the relaxation activity of topoisomerase IV and also has a modest effect on decatenation. The sequence is that of DNA topoisomerase 4 subunit B from Escherichia coli (strain K12).